The following is a 274-amino-acid chain: Pantothenate synthetase (274 aa).

27–34 (MGALHKGH) contacts ATP. The Proton donor role is filled by histidine 34. Glutamine 58 provides a ligand contact to (R)-pantoate. Glutamine 58 contributes to the beta-alanine binding site. Residue 145-148 (GQKD) coordinates ATP. Position 151 (glutamine 151) interacts with (R)-pantoate. 182–185 (LSSR) lines the ATP pocket.

The protein belongs to the pantothenate synthetase family. In terms of assembly, homodimer.

The protein localises to the cytoplasm. The enzyme catalyses (R)-pantoate + beta-alanine + ATP = (R)-pantothenate + AMP + diphosphate + H(+). It functions in the pathway cofactor biosynthesis; (R)-pantothenate biosynthesis; (R)-pantothenate from (R)-pantoate and beta-alanine: step 1/1. In terms of biological role, catalyzes the condensation of pantoate with beta-alanine in an ATP-dependent reaction via a pantoyl-adenylate intermediate. This Wolinella succinogenes (strain ATCC 29543 / DSM 1740 / CCUG 13145 / JCM 31913 / LMG 7466 / NCTC 11488 / FDC 602W) (Vibrio succinogenes) protein is Pantothenate synthetase.